We begin with the raw amino-acid sequence, 406 residues long: Propionate kinase (406 aa).

N11 and K18 together coordinate ATP. N11 is a Mg(2+) binding site. Position 86 (R86) interacts with substrate. D143 acts as the Proton donor/acceptor in catalysis. ATP-binding positions include H175, 203–207 (HLGNG), 278–280 (DMR), and 326–330 (GIGEN).

The protein belongs to the acetokinase family. TdcD subfamily. As to quaternary structure, homodimer. The cofactor is Mg(2+).

It carries out the reaction propanoate + ATP = propanoyl phosphate + ADP. It participates in amino-acid degradation; L-threonine degradation via propanoate pathway; propanoate from L-threonine: step 4/4. Functionally, catalyzes the conversion of propionyl phosphate and ADP to propionate and ATP. This chain is Propionate kinase, found in Yersinia enterocolitica serotype O:8 / biotype 1B (strain NCTC 13174 / 8081).